Reading from the N-terminus, the 212-residue chain is Cytidylate kinase (212 aa).

Residue Gly-7 to Thr-15 participates in ATP binding.

This sequence belongs to the cytidylate kinase family. Type 1 subfamily.

It is found in the cytoplasm. The enzyme catalyses CMP + ATP = CDP + ADP. The catalysed reaction is dCMP + ATP = dCDP + ADP. This is Cytidylate kinase from Rhodopseudomonas palustris (strain BisB18).